Here is a 74-residue protein sequence, read N- to C-terminus: Large ribosomal subunit protein bL31 (74 aa).

It belongs to the bacterial ribosomal protein bL31 family. Type A subfamily. In terms of assembly, part of the 50S ribosomal subunit.

Binds the 23S rRNA. This chain is Large ribosomal subunit protein bL31, found in Afipia carboxidovorans (strain ATCC 49405 / DSM 1227 / KCTC 32145 / OM5) (Oligotropha carboxidovorans).